The following is a 227-amino-acid chain: Transmembrane emp24 domain-containing protein 1 (227 aa).

An N-terminal signal peptide occupies residues 1-23; it reads MMAAGAALALALWLLMPPVEVGG. Residues 24–194 lie on the Extracellular side of the membrane; the sequence is AGPPPIQDGE…LQEGNLERVN (171 aa). The GOLD domain maps to 43–125; it reads KQCFYQSAPA…EKLVFFELIF (83 aa). The stretch at 145–170 forms a coiled coil; it reads EMLDVKMEDIKESIETMRTRLERSIQ. A helical membrane pass occupies residues 195-215; the sequence is FWSAVNVAVLLLVAVLQVCTL. Residues 216–227 are Cytoplasmic-facing; sequence KRFFQDKRPVPT. The COPII vesicle coat-binding motif lies at 218–219; the sequence is FF. The COPI vesicle coat-binding signature appears at 218-227; sequence FFQDKRPVPT.

The protein belongs to the EMP24/GP25L family. In terms of assembly, homodimer in endoplasmic reticulum, endoplasmic reticulum-Golgi intermediate compartment and cis-Golgi network. Interacts with IL1RL1. Interacts with RNF26; this interaction is important to modulate innate immune signaling through the cGAS-STING pathway. Widely expressed.

The protein resides in the cell membrane. It localises to the endoplasmic reticulum membrane. The protein localises to the golgi apparatus. It is found in the cis-Golgi network membrane. Its subcellular location is the endoplasmic reticulum-Golgi intermediate compartment membrane. Potential role in vesicular protein trafficking, mainly in the early secretory pathway. May act as a cargo receptor at the lumenal side for incorporation of secretory cargo molecules into transport vesicles and may be involved in vesicle coat formation at the cytoplasmic side. Plays a positive role in IL-33-mediated IL-8 and IL-6 production by interacting with interleukin-33 receptor IL1RL1. Also plays a role in the modulation of innate immune signaling through the cGAS-STING pathway by interacting with RNF26. This chain is Transmembrane emp24 domain-containing protein 1 (TMED1), found in Homo sapiens (Human).